The primary structure comprises 250 residues: HTH-type transcriptional regulator SarS (250 aa).

DNA-binding regions (H-T-H motif) lie at residues phenylalanine 53–lysine 76 and leucine 177–lysine 200.

It belongs to the SarA family.

Its subcellular location is the cytoplasm. Its function is as follows. Transcriptional regulator that controls expression of some virulence factors in a cell density-dependent manner. This is HTH-type transcriptional regulator SarS (sarS) from Staphylococcus aureus (strain Mu3 / ATCC 700698).